Here is a 632-residue protein sequence, read N- to C-terminus: Cell pattern formation-associated protein stuA (632 aa).

Residues 1-20 (MNQTQSYMDVHTSHFSSPQP) show a composition bias toward polar residues. Residues 1–27 (MNQTQSYMDVHTSHFSSPQPYGSHGAT) are disordered. Positions 128–234 (RVTATLWEDE…HNIGGLLYHP (107 aa)) constitute an HTH APSES-type domain. The H-T-H motif DNA-binding region spans 162–183 (GTKLLNVAGMTRGRRDGILKSE). Disordered regions lie at residues 246–315 (DSQQ…ASSL), 340–386 (QNVP…KSYY), 403–460 (AHSL…QQEP), and 473–632 (NRNS…MRRR). 4 stretches are compositionally biased toward polar residues: residues 254-264 (GSQTARTSQGP), 275-295 (MNGS…QTNG), 340-354 (QNVP…TRSM), and 364-376 (GNNL…YQNQ). A compositionally biased stretch (low complexity) spans 377–386 (PAYDSSKSYY). The segment covering 428–438 (EQEHDEVKVDR) has biased composition (basic and acidic residues). Residues 473–506 (NRNSYTYTTNPSVSSLSGDHSQLGGSPSHQNGSD) are compositionally biased toward polar residues. The segment covering 558–576 (AYASNYSGYSSVNGSSMGS) has biased composition (low complexity). The interval 578-604 (KRMRDDDDDHLSRSDGRENEYETKRRK) is nuclear localization domain. Basic and acidic residues predominate over residues 579-600 (RMRDDDDDHLSRSDGRENEYET).

The protein belongs to the EFG1/PHD1/stuA family.

Its subcellular location is the nucleus. Functionally, transcription factor that regulates asexual reproduction. Binds the StuA-response elements (StRE) with the consensus sequence 5'-(A/T)CGCG(T/A)N(A/C)-3' at the promoters of target genes. Required for accurate spatial organization of the developing conidiophore. Primarily involved in the formation of the uninucleate sterigmata, which arise by budding in this multicellular structure. Required for metula and phialide formation during conidiation but is not required for dimorphic growth. In Talaromyces marneffei (Penicillium marneffei), this protein is Cell pattern formation-associated protein stuA.